Reading from the N-terminus, the 190-residue chain is Embryo-specific protein ATS3B (190 aa).

The first 24 residues, 1 to 24 (MASVRLFFTLISFVFIISTSVYES), serve as a signal peptide directing secretion. An N-linked (GlcNAc...) asparagine glycan is attached at N37. Residues 48–158 (CAYTVIISTS…ESVWYGFNYC (111 aa)) form the PLAT domain.

In terms of assembly, interacts with EULS3 (via N-terminus). As to expression, expressed in roots, rosette leaves, stems, cauline leaves and flowers.

It is found in the secreted. Its function is as follows. May play a role during embryo development. The chain is Embryo-specific protein ATS3B from Arabidopsis thaliana (Mouse-ear cress).